The following is a 134-amino-acid chain: Profilin-2 (134 aa).

An intrachain disulfide couples C13 to C118. Positions 84–100 (AVIRGKKGSGGITIKKT) match the Involved in PIP2 interaction motif. The residue at position 114 (T114) is a Phosphothreonine.

It belongs to the profilin family. As to quaternary structure, occurs in many kinds of cells as a complex with monomeric actin in a 1:1 ratio. Post-translationally, phosphorylated by MAP kinases.

The protein resides in the cytoplasm. The protein localises to the cytoskeleton. Functionally, binds to actin and affects the structure of the cytoskeleton. At high concentrations, profilin prevents the polymerization of actin, whereas it enhances it at low concentrations. The chain is Profilin-2 from Olea europaea (Common olive).